The primary structure comprises 258 residues: tRNA pseudouridine synthase A (258 aa).

Aspartate 52 functions as the Nucleophile in the catalytic mechanism. A substrate-binding site is contributed by tyrosine 111.

Belongs to the tRNA pseudouridine synthase TruA family. In terms of assembly, homodimer.

It carries out the reaction uridine(38/39/40) in tRNA = pseudouridine(38/39/40) in tRNA. Formation of pseudouridine at positions 38, 39 and 40 in the anticodon stem and loop of transfer RNAs. The protein is tRNA pseudouridine synthase A of Azorhizobium caulinodans (strain ATCC 43989 / DSM 5975 / JCM 20966 / LMG 6465 / NBRC 14845 / NCIMB 13405 / ORS 571).